A 2353-amino-acid chain; its full sequence is Nonribosomal peptide synthetase 7 (2353 aa).

Positions 305 to 684 are adenylation 1; it reads TFSALNTRAN…AIEEVEDSAV (380 aa). The Carrier 1 domain occupies 776 to 853; that stretch reads RDLTDSEKVV…QVAAAVQPQP (78 aa). Ser813 carries the O-(pantetheine 4'-phosphoryl)serine modification. The tract at residues 885–1147 is condensation 1; sequence EDAFPVTPFQ…LMVAPLRVKV (263 aa). The interval 1338–1725 is adenylation 2; the sequence is TYAGLAIKMN…QTNVFRQCAV (388 aa). The region spanning 1826–1902 is the Carrier 2 domain; sequence EICSEAEREL…EQAALMVQGQ (77 aa). Residue Ser1863 is modified to O-(pantetheine 4'-phosphoryl)serine. A condensation 2 region spans residues 1939–2214; the sequence is EDIYPCSPGQ…NGNCANFLPY (276 aa).

Belongs to the NRP synthetase family.

Its function is as follows. Nonribosomal peptide synthesis (NRPS) is a key mechanism responsible for the biosynthesis of bioactive metabolites which are potentially contributing to organismal virulence. The sequence is that of Nonribosomal peptide synthetase 7 (NRPS7) from Aspergillus fumigatus (strain ATCC MYA-4609 / CBS 101355 / FGSC A1100 / Af293) (Neosartorya fumigata).